We begin with the raw amino-acid sequence, 137 residues long: Peptide methionine sulfoxide reductase MsrB (137 aa).

Residues 7–129 form the MsrB domain; that stretch reads AEELKKKLSE…NSASLAFSDE (123 aa). Positions 46, 49, 95, and 98 each coordinate Zn(2+). Cys118 acts as the Nucleophile in catalysis.

The protein belongs to the MsrB Met sulfoxide reductase family. Zn(2+) is required as a cofactor.

The enzyme catalyses L-methionyl-[protein] + [thioredoxin]-disulfide + H2O = L-methionyl-(R)-S-oxide-[protein] + [thioredoxin]-dithiol. This Salmonella arizonae (strain ATCC BAA-731 / CDC346-86 / RSK2980) protein is Peptide methionine sulfoxide reductase MsrB.